The following is a 62-amino-acid chain: Large ribosomal subunit protein uL29 (62 aa).

It belongs to the universal ribosomal protein uL29 family.

The chain is Large ribosomal subunit protein uL29 from Oleidesulfovibrio alaskensis (strain ATCC BAA-1058 / DSM 17464 / G20) (Desulfovibrio alaskensis).